The sequence spans 253 residues: MHLKEILAQFSFFTAIPVKSSASLEEIAESSYISPIIVGISLGLIESVAYLILYRILGELTGIVLLGIIELLRGFNHLDGLLDLGDALMIRGNREKKIKALKDVEVGSGGIGLLLVYLSIQIVALLKLDFSLYTIFYLISSNVLSMSLSLYILSTISPIPESNLGRIFHDKLKGKSTILLLELIPFISLYNVIVFIIFYMIMYKICGSLGGSSGDIAGASITLSFPLFLITDEITNLNYSLLSILCYLFSHLH.

The next 4 helical transmembrane spans lie at 33-53, 106-126, 132-152, and 178-198; these read ISPI…YLIL, VGSG…VALL, LYTI…SLYI, and ILLL…FIIF.

Belongs to the CobS family. It depends on Mg(2+) as a cofactor.

The protein resides in the cell membrane. The catalysed reaction is alpha-ribazole + adenosylcob(III)inamide-GDP = adenosylcob(III)alamin + GMP + H(+). The enzyme catalyses alpha-ribazole 5'-phosphate + adenosylcob(III)inamide-GDP = adenosylcob(III)alamin 5'-phosphate + GMP + H(+). The protein operates within cofactor biosynthesis; adenosylcobalamin biosynthesis; adenosylcobalamin from cob(II)yrinate a,c-diamide: step 7/7. Joins adenosylcobinamide-GDP and alpha-ribazole to generate adenosylcobalamin (Ado-cobalamin). Also synthesizes adenosylcobalamin 5'-phosphate from adenosylcobinamide-GDP and alpha-ribazole 5'-phosphate. This Saccharolobus solfataricus (strain ATCC 35092 / DSM 1617 / JCM 11322 / P2) (Sulfolobus solfataricus) protein is Adenosylcobinamide-GDP ribazoletransferase.